A 443-amino-acid chain; its full sequence is Protein IQ-DOMAIN 11 (443 aa).

Residues 5 to 20 are calmodulin-binding; it reads KGLFTVLKRIFISEVN. Short sequence motifs (nuclear localization signal) lie at residues 11 to 18 and 27 to 34; these read LKRIFISE and RRKWTFWK. Positions 44–65 are disordered; the sequence is ITAPPEHRTSHESHEEQKEEIV. Basic and acidic residues predominate over residues 48 to 64; sequence PEHRTSHESHEEQKEEI. 2 IQ domains span residues 113 to 138 and 139 to 161; these read AATRIQTAFRGHLARKALRALKGIVK and LQAYIRGRAVRRQAMTTLKCLQS. The span at 277–293 shows a compositional bias: basic and acidic residues; that stretch reads FSSKTKPKDETLNEKQL. The tract at residues 277–361 is disordered; the sequence is FSSKTKPKDE…PRSFDTQSES (85 aa).

Belongs to the IQD family. In terms of assembly, binds to multiple calmodulin (CaM) in the presence of Ca(2+) and CaM-like proteins. In terms of tissue distribution, expressed in hypocotyls, cotyledons, leaves and petioles.

It localises to the nucleus. The protein resides in the cytoplasm. Its subcellular location is the cytoskeleton. Functionally, may be involved in cooperative interactions with calmodulins or calmodulin-like proteins. Recruits calmodulin proteins to microtubules, thus being a potential scaffold in cellular signaling and trafficking. Regulates cell shape and elongation in aerial organs (i.e. epidermis pavement cells) probably by regulating cortical microtubules (MT) arrays orientation. May associate with nucleic acids and regulate gene expression at the transcriptional or post-transcriptional level. The sequence is that of Protein IQ-DOMAIN 11 from Arabidopsis thaliana (Mouse-ear cress).